The following is a 357-amino-acid chain: MSTNPIQPLLDVLYQGKSLNREQTAELFGALIRGEMSEAAMAGMLVALKMRGETIDEISGAADAMRAAAKPFPCPERNNNPLHNGIVDIVGTGGDGFNTINISTTAAFVAAAAGAKVAKHGNRSVSSKSGSSDLLAQFGIDLTMSPETASRCLDALNLCFLFAPHYHGGVKHAVPVRQALKTRTLFNVLGPLINPARPEFMLLGVYSPELVLPIAKVLKALGTKRAMVVHGSGLDEVALHGNTQVAELKDGDIVEYQLTPADLGVPLAQITDLEGGEPAQNALITEAILKGRGTEAHANAVAINAGCALYVCGIADSVKAGTLLALATIQSGKAFELLSQLAKVSGEALVNGQEKGR.

5-phospho-alpha-D-ribose 1-diphosphate-binding positions include Gly-91, Gly-94 to Asp-95, Thr-99, Asn-101 to Thr-104, Lys-119 to Ser-127, and Ser-131. Gly-91 serves as a coordination point for anthranilate. Ser-103 contributes to the Mg(2+) binding site. An anthranilate-binding site is contributed by Asn-122. Residue Arg-177 coordinates anthranilate. Mg(2+) contacts are provided by Asp-235 and Glu-236.

The protein belongs to the anthranilate phosphoribosyltransferase family. Homodimer. Mg(2+) serves as cofactor.

It carries out the reaction N-(5-phospho-beta-D-ribosyl)anthranilate + diphosphate = 5-phospho-alpha-D-ribose 1-diphosphate + anthranilate. Its pathway is amino-acid biosynthesis; L-tryptophan biosynthesis; L-tryptophan from chorismate: step 2/5. Its function is as follows. Catalyzes the transfer of the phosphoribosyl group of 5-phosphorylribose-1-pyrophosphate (PRPP) to anthranilate to yield N-(5'-phosphoribosyl)-anthranilate (PRA). The protein is Anthranilate phosphoribosyltransferase of Shewanella baltica (strain OS185).